The following is a 211-amino-acid chain: MRLHVVDHPLVAHKLTTLRDQRTDSPTFRRLADELVTLLAYEATRDVRTEQVDIVTPVAPTTGVRLSHPRPLVVPILRAGLGMLDGMVRLLPTAEVGFLGMVRDEETLQASTYATRMPDDLSGRQVYVLDPMLATGGTLVAAIQELIKRGADDVTAVVLLAAPEGVEIMERDLAGTPVTVVTASVDERLNEHGYIVPGLGDAGDRMYGAAE.

5-phospho-alpha-D-ribose 1-diphosphate contacts are provided by residues Arg78, Arg103, and 130 to 138 (DPMLATGGT). Uracil is bound by residues Ile195 and 200–202 (GDA). Residue Asp201 participates in 5-phospho-alpha-D-ribose 1-diphosphate binding.

It belongs to the UPRTase family. Mg(2+) is required as a cofactor.

It carries out the reaction UMP + diphosphate = 5-phospho-alpha-D-ribose 1-diphosphate + uracil. Its pathway is pyrimidine metabolism; UMP biosynthesis via salvage pathway; UMP from uracil: step 1/1. Its activity is regulated as follows. Allosterically activated by GTP. Its function is as follows. Catalyzes the conversion of uracil and 5-phospho-alpha-D-ribose 1-diphosphate (PRPP) to UMP and diphosphate. This is Uracil phosphoribosyltransferase from Streptomyces avermitilis (strain ATCC 31267 / DSM 46492 / JCM 5070 / NBRC 14893 / NCIMB 12804 / NRRL 8165 / MA-4680).